Reading from the N-terminus, the 399-residue chain is Homeobox protein ceh-39 (399 aa).

2 disordered regions span residues 32–91 (PEPA…GDTE) and 158–187 (AKKSRGRTAPRTPKSLETSKPGRGVKRPAS). Over residues 60 to 79 (SSMCGSSSSSSSSSYSSGSS) the composition is skewed to low complexity. A DNA-binding region (CUT) is located at residues 205–291 (NRQIGDDEEL…VRRALCFMKK (87 aa)). The segment at residues 315-374 (SDERIRRFTFTQTQLDSLHTVFQQQDRPNREMQQALSATLKLNRSTVGNFFMNARRRLPK) is a DNA-binding region (homeobox).

The protein belongs to the CUT homeobox family. As to expression, expressed in hermaphrodite gonads.

Its subcellular location is the nucleus. The protein localises to the chromosome. Its function is as follows. Transcriptional regulator which is involved in the sex determination and X chromosome dosage compensation pathways. Directly binds to 5'-ATTGAT-3' sites in the promoter of sex-determining factor xol-1 to negatively regulate its expression and promote hermaphrodite development. Associates with condensed DNA during mitosis. The polypeptide is Homeobox protein ceh-39 (Caenorhabditis elegans).